Here is a 1357-residue protein sequence, read N- to C-terminus: DNA-directed RNA polymerase subunit beta (1357 aa).

Belongs to the RNA polymerase beta chain family. The RNAP catalytic core consists of 2 alpha, 1 beta, 1 beta' and 1 omega subunit. When a sigma factor is associated with the core the holoenzyme is formed, which can initiate transcription.

The enzyme catalyses RNA(n) + a ribonucleoside 5'-triphosphate = RNA(n+1) + diphosphate. DNA-dependent RNA polymerase catalyzes the transcription of DNA into RNA using the four ribonucleoside triphosphates as substrates. The protein is DNA-directed RNA polymerase subunit beta of Neorickettsia sennetsu (Ehrlichia sennetsu).